We begin with the raw amino-acid sequence, 567 residues long: MSQEFDYIIVGAGSAGNTLATRLTEDEGVTVLLLEAGGPDYRFDFRTQMPAALAFPLQGRRYNWAYETDPEPHMDGRRMECGRGKGLGGSSLINGMCYIRGNAMDYDGWAKLPGLEDWSYLDCLPYFRKAETRDIGPNDYHGGDGPVSVTTPKAGNNPLFHAMVEAGVQAGYPRTEDLNGYQQEGFGPMDRTVTPNGRRASTARGYLDVAKKRSTLTIVTHALTDKVLFEGKRAVGVRYLVGAAEERVEARARKEVIVCSGAIASPQLLQRSGVGPAKLLESLDIPVVHDLPGVGENLQDHLELYLQYACTQPVSLYPSLLWYNQPAIGAEWLFNGTGIGASNQFEAGGFIRTRPEFEWPNIQYHFLPVAINYNGSNGVKEHGFQAHMGSMRSPSRGRVQVKSKDPRQHPSILFNYMATEQDWQEFRDGIRLTREIMQQPALDAFRGREISPGIEVQTDEQLDKFIREHAETAFHPSCSCKMGTDDMAVVDGEGRVHGMQGLRVVDASIMPIITTGNLNAPTIMMAEKIADKIRGRQPLPRSKAPYYVAGDAPVKGKAMRDVSAVAQ.

6–35 (DYIIVGAGSAGNTLATRLTEDEGVTVLLLE) serves as a coordination point for FAD. His475 serves as the catalytic Proton acceptor.

The protein belongs to the GMC oxidoreductase family. It depends on FAD as a cofactor.

The enzyme catalyses choline + A = betaine aldehyde + AH2. It catalyses the reaction betaine aldehyde + NAD(+) + H2O = glycine betaine + NADH + 2 H(+). It participates in amine and polyamine biosynthesis; betaine biosynthesis via choline pathway; betaine aldehyde from choline (cytochrome c reductase route): step 1/1. Its function is as follows. Involved in the biosynthesis of the osmoprotectant glycine betaine. Catalyzes the oxidation of choline to betaine aldehyde and betaine aldehyde to glycine betaine at the same rate. This Pseudomonas fluorescens (strain Pf0-1) protein is Oxygen-dependent choline dehydrogenase.